The following is a 595-amino-acid chain: NADH-quinone oxidoreductase subunit C/D (595 aa).

The interval 1 to 185 (MNKNICLSAS…NPFVLTKEKE (185 aa)) is NADH dehydrogenase I subunit C. Residues 209–595 (DFMFLNFGPN…IDFVMSDVDR (387 aa)) form an NADH dehydrogenase I subunit D region.

This sequence in the N-terminal section; belongs to the complex I 30 kDa subunit family. The protein in the C-terminal section; belongs to the complex I 49 kDa subunit family. As to quaternary structure, NDH-1 is composed of 13 different subunits. Subunits NuoB, CD, E, F, and G constitute the peripheral sector of the complex.

Its subcellular location is the cell inner membrane. It catalyses the reaction a quinone + NADH + 5 H(+)(in) = a quinol + NAD(+) + 4 H(+)(out). In terms of biological role, NDH-1 shuttles electrons from NADH, via FMN and iron-sulfur (Fe-S) centers, to quinones in the respiratory chain. The immediate electron acceptor for the enzyme in this species is believed to be ubiquinone. Couples the redox reaction to proton translocation (for every two electrons transferred, four hydrogen ions are translocated across the cytoplasmic membrane), and thus conserves the redox energy in a proton gradient. This is NADH-quinone oxidoreductase subunit C/D from Baumannia cicadellinicola subsp. Homalodisca coagulata.